The chain runs to 261 residues: Early E1A protein (261 aa).

The interval 43–51 is interaction with RB1 in competition with E2F1; sequence PTLHDLYDL. Positions 78-149 are interaction with UBE2I; sequence EGLDINPPPE…VNEGVKAASD (72 aa). The PXLXP motif, interaction with host ZMYND11 signature appears at 106–110; that stretch reads PDLGA. Residues 115–119 carry the LXCXE motif, interaction with host RB1 and TMEM173/STING motif; sequence LRCYE. A zinc finger spans residues 163-183; the sequence is CKSCEFHRNNTGMKELLCSLC. A disordered region spans residues 197 to 261; the sequence is SDDESPSPDS…DLSTRKLPRQ (65 aa). A compositionally biased stretch (low complexity) spans 203-212; sequence SPDSTTSPPE. The short motif at 250–254 is the PXDLS motif, CTBP-binding element; it reads PLDLS. Positions 256–261 match the Nuclear localization signal motif; sequence RKLPRQ.

Belongs to the adenoviridae E1A protein family. Interacts with host UBE2I; this interaction interferes with polySUMOylation. Interacts with host RB1; this interaction induces the aberrant dissociation of RB1-E2F1 complex thereby disrupting the activity of RB1 and activating E2F1-regulated genes. Interacts with host ATF7; the interaction enhances ATF7-mediated viral transactivation activity which requires the zinc binding domains of both proteins. Isoform early E1A 32 kDa protein and isoform early E1A 26 kDa protein interact (via N-terminus) with CUL1 and E3 ubiquitin ligase RBX1; these interactions inhibit RBX1-CUL1-dependent elongation reaction of ubiquitin chains and attenuate ubiquitination of SCF(FBXW7) target proteins. Interacts (via PXLXP motif) with host ZMYND11/BS69 (via MYND-type zinc finger); this interaction inhibits E1A mediated transactivation. Interacts with host EP300; this interaction stimulates the acetylation of RB1 by recruiting EP300 and RB1 into a multimeric-protein complex. Interacts with host CTBP1 and CTBP2; this interaction seems to potentiate viral replication. Interacts with host DCAF7. Interacts with host DYRK1A. Interacts with host KPNA4; this interaction allows E1A import into the host nucleus. Interacts with host EP400; this interaction stabilizes MYC. Interacts with host TBP protein; this interaction probably disrupts the TBP-TATA complex. Interacts (via LXCXE motif) with host TMEM173/STING; this interaction impairs the ability of TMEM173/STING to sense cytosolic DNA and promote the production of type I interferon (IFN-alpha and IFN-beta). Interacts (via C-terminus) with host ZBED1/hDREF (via C-terminus); the interaction is direct.

Its subcellular location is the host nucleus. Plays a role in viral genome replication by driving entry of quiescent cells into the cell cycle. Stimulation of progression from G1 to S phase allows the virus to efficiently use the cellular DNA replicating machinery to achieve viral genome replication. E1A protein has both transforming and trans-activating activities. Induces the disassembly of the E2F1 transcription factor from RB1 by direct competition for the same binding site on RB1, with subsequent transcriptional activation of E2F1-regulated S-phase genes and of the E2 region of the adenoviral genome. Release of E2F1 leads to the ARF-mediated inhibition of MDM2 and causes TP53/p53 to accumulate because it is not targeted for degradation by MDM2-mediated ubiquitination anymore. This increase in TP53, in turn, would arrest the cell proliferation and direct its death but this effect is counteracted by the viral protein E1B-55K. Inactivation of the ability of RB1 to arrest the cell cycle is critical for cellular transformation, uncontrolled cellular growth and proliferation induced by viral infection. Interaction with RBX1 and CUL1 inhibits ubiquitination of the proteins targeted by SCF(FBXW7) ubiquitin ligase complex, and may be linked to unregulated host cell proliferation. The tumorigenesis-restraining activity of E1A may be related to the disruption of the host CtBP-CtIP complex through the CtBP binding motif. Interaction with host TMEM173/STING impairs the ability of TMEM173/STING to sense cytosolic DNA and promote the production of type I interferon (IFN-alpha and IFN-beta). Promotes the sumoylation of host ZBED1/hDREF with SUMO1. This chain is Early E1A protein, found in Human adenovirus B serotype 7 (HAdV-7).